The following is a 189-amino-acid chain: Lipid A acyltransferase PagP (189 aa).

A signal peptide spans 1 to 23; it reads MRLKLILYFLILSCYLGIGSARA. Active-site residues include H61, D104, and S105.

This sequence belongs to the lipid A palmitoyltransferase family. In terms of assembly, homodimer.

It is found in the cell outer membrane. The catalysed reaction is a lipid A + a 1,2-diacyl-sn-glycero-3-phosphocholine = a hepta-acyl lipid A + a 2-acyl-sn-glycero-3-phosphocholine. The enzyme catalyses a lipid IVA + a 1,2-diacyl-sn-glycero-3-phosphocholine = a lipid IVB + a 2-acyl-sn-glycero-3-phosphocholine. It carries out the reaction a lipid IIA + a 1,2-diacyl-sn-glycero-3-phosphocholine = a lipid IIB + a 2-acyl-sn-glycero-3-phosphocholine. Functionally, transfers a fatty acid residue from the sn-1 position of a phospholipid to the N-linked hydroxyfatty acid chain on the proximal unit of lipid A or its precursors. This Erwinia tasmaniensis (strain DSM 17950 / CFBP 7177 / CIP 109463 / NCPPB 4357 / Et1/99) protein is Lipid A acyltransferase PagP.